Here is a 224-residue protein sequence, read N- to C-terminus: Response regulator protein GraR (224 aa).

The Response regulatory domain maps to 2–115 (QVLLVEDDQT…VLIAKLQAIY (114 aa)). A 4-aspartylphosphate modification is found at Asp-51. A DNA-binding region (ompR/PhoB-type) is located at residues 126-224 (KRTLNWQDAL…KVGKGYMAHE (99 aa)).

Phosphorylated by GraS.

The protein resides in the cytoplasm. Functionally, member of the two-component regulatory system GraR/GraS involved in resistance against cationic antimicrobial peptides (CAMPs). The polypeptide is Response regulator protein GraR (graR) (Staphylococcus haemolyticus (strain JCSC1435)).